We begin with the raw amino-acid sequence, 124 residues long: MNQRKPANNSLIDNCLTLTGIVTSIVKQSQSPLGIPNYSFWLEHRSNKMEVNLERQVWCKIQVILNGCQFSLITQQIKLGDKVKISGFIHTHKDYNGLSKLVLHTEQIEFIDQEKPNGTLFPSS.

The SSB domain occupies 12 to 112 (IDNCLTLTGI…LHTEQIEFID (101 aa)).

It belongs to the PriB family. In terms of assembly, homodimer. Interacts with PriA and DnaT. Component of the replication restart primosome. Primosome assembly occurs via a 'hand-off' mechanism. PriA binds to replication forks, subsequently PriB then DnaT bind; DnaT then displaces ssDNA to generate the helicase loading substrate.

Involved in the restart of stalled replication forks, which reloads the replicative helicase on sites other than the origin of replication; the PriA-PriB pathway is the major replication restart pathway. During primosome assembly it facilitates complex formation between PriA and DnaT on DNA; stabilizes PriA on DNA. Stimulates the DNA unwinding activity of PriA helicase. The sequence is that of Replication restart protein PriB from Haemophilus ducreyi (strain 35000HP / ATCC 700724).